Consider the following 432-residue polypeptide: Glutamate-1-semialdehyde 2,1-aminomutase (432 aa).

N6-(pyridoxal phosphate)lysine is present on lysine 272.

Belongs to the class-III pyridoxal-phosphate-dependent aminotransferase family. HemL subfamily. As to quaternary structure, homodimer. Requires pyridoxal 5'-phosphate as cofactor.

The protein resides in the cytoplasm. It carries out the reaction (S)-4-amino-5-oxopentanoate = 5-aminolevulinate. It participates in porphyrin-containing compound metabolism; protoporphyrin-IX biosynthesis; 5-aminolevulinate from L-glutamyl-tRNA(Glu): step 2/2. Its pathway is porphyrin-containing compound metabolism; chlorophyll biosynthesis. The chain is Glutamate-1-semialdehyde 2,1-aminomutase from Cyanothece sp. (strain PCC 7425 / ATCC 29141).